A 765-amino-acid chain; its full sequence is Ubiquitin-like modifier-activating enzyme atg7 (765 aa).

Residues 436–441 (GAGTLG) carry the GXGXXG motif motif. Residue Cys-616 is the Glycyl thioester intermediate of the active site. 2 disordered regions span residues 646-670 (AAPA…PPNH) and 744-765 (AAND…PELL). The homodimerization stretch occupies residues 721-760 (ALTEKDYITELSGLAEVQRKAEAAANDVEWDSDEEGMEDE). Acidic residues predominate over residues 748-765 (VEWDSDEEGMEDEEPELL).

This sequence belongs to the ATG7 family. As to quaternary structure, homodimer. Interacts with ATG8 through a thioester bond between Cys-616 and the C-terminal Gly of ATG8 and with ATG12 through a thioester bond between Cys-616 and the C-terminal Gly of ATG12. Also interacts with ATG3.

The protein resides in the cytoplasm. Its subcellular location is the preautophagosomal structure. In terms of biological role, E1-like activating enzyme involved in the 2 ubiquitin-like systems required for cytoplasm to vacuole transport (Cvt) and autophagy. Activates ATG12 for its conjugation with ATG5 and ATG8 for its conjugation with phosphatidylethanolamine. Both systems are needed for the ATG8 association to Cvt vesicles and autophagosomes membranes. Autophagy is essential for maintenance of amino acid levels and protein synthesis under nitrogen starvation. Required for selective autophagic degradation of the nucleus (nucleophagy) as well as for mitophagy which contributes to regulate mitochondrial quantity and quality by eliminating the mitochondria to a basal level to fulfill cellular energy requirements and preventing excess ROS production. Required for normal mycelial growth and conidiogenesis, and regulates sclerotial formation. Plays an essential role in pathogenesis. This is Ubiquitin-like modifier-activating enzyme atg7 from Botryotinia fuckeliana (strain BcDW1) (Noble rot fungus).